A 308-amino-acid polypeptide reads, in one-letter code: Glycine--tRNA ligase alpha subunit (308 aa).

This sequence belongs to the class-II aminoacyl-tRNA synthetase family. Tetramer of two alpha and two beta subunits.

The protein localises to the cytoplasm. The enzyme catalyses tRNA(Gly) + glycine + ATP = glycyl-tRNA(Gly) + AMP + diphosphate. This chain is Glycine--tRNA ligase alpha subunit, found in Brucella canis (strain ATCC 23365 / NCTC 10854 / RM-666).